The following is a 63-amino-acid chain: Keratin-associated protein 8-1 (63 aa).

The tract at residues 12–54 (PGCYWGSYGYPLGYSVGCGYGSTYSPVGYGFGYGYNGCGAFGY) is 12 X 2 AA repeats of G-[YCGS].

This sequence belongs to the KRTAP type 8 family. In terms of assembly, interacts with hair keratins. As to expression, is essentially restricted to only one vertical half of the hair forming compartment and in beard hairs is absent from the central medulla.

Functionally, in the hair cortex, hair keratin intermediate filaments are embedded in an interfilamentous matrix, consisting of hair keratin-associated proteins (KRTAP), which are essential for the formation of a rigid and resistant hair shaft through their extensive disulfide bond cross-linking with abundant cysteine residues of hair keratins. The matrix proteins include the high-sulfur and high-glycine-tyrosine keratins. The chain is Keratin-associated protein 8-1 (KRTAP8-1) from Homo sapiens (Human).